Reading from the N-terminus, the 193-residue chain is Superoxide dismutase [Fe] (193 aa).

His-27, His-75, Asp-159, and His-163 together coordinate Fe cation.

It belongs to the iron/manganese superoxide dismutase family. Homodimer. Fe cation serves as cofactor.

The enzyme catalyses 2 superoxide + 2 H(+) = H2O2 + O2. In terms of biological role, destroys superoxide anion radicals which are normally produced within the cells and which are toxic to biological systems. The chain is Superoxide dismutase [Fe] (sodB) from Bacteroides fragilis (strain YCH46).